The sequence spans 54 residues: Ovomucoid (54 aa).

The Kazal-like domain occupies valine 4–cysteine 54. Cystine bridges form between cysteine 6-cysteine 36, cysteine 14-cysteine 33, and cysteine 22-cysteine 54. Asparagine 43 carries an N-linked (GlcNAc...) asparagine glycan.

It is found in the secreted. The chain is Ovomucoid from Geococcyx californianus (Greater roadrunner).